Here is a 173-residue protein sequence, read N- to C-terminus: Myosin light chain 5 (173 aa).

The interval 1–22 (MASRKTKKKEGGGLRAQRASSN) is disordered. EF-hand domains are found at residues 30–65 (TQIQEFKEAFTLMDQNRDGFIDKEDLKDTYASLGKT), 100–135 (DAEETILNAFKMLDPEGKGSINKDYIKRLLMSQADK), and 136–171 (MTAEEVDQMFQFATIDAAGNLDYKALSYVLTHGEEK). Residues Asp43, Asn45, Asp47, and Asp54 each contribute to the Ca(2+) site.

In terms of assembly, myosin is a hexamer of 2 heavy chains and 4 light chains. As to expression, jaw-closing muscles.

This is Myosin light chain 5 (MYL5) from Felis catus (Cat).